Reading from the N-terminus, the 179-residue chain is MPFGDNYIMSPINRRRCSRVSPVECLQLTWSKCELLVLEFKPRMSFSHTQIVLYPKNTCCHSFKHYLSHQTLSSLKSVESCIRMGNLTCMPSSNSRERSRLRTIVSSIVYTQAVAPISTPTFKVPNQAQMSSPIWIRTETPSNGDNFRSMDDLLEAVNNQRMMLTPKRLTAAVSQKLLM.

Belongs to the geminiviridae protein AC4/C4 family.

Pathogenicity determinant. May act as a suppressor of RNA-mediated gene silencing, also known as post-transcriptional gene silencing (PTGS), a mechanism of plant viral defense that limits the accumulation of viral RNAs. This chain is Protein AC4, found in African cassava mosaic virus (isolate Nigerian) (ACMV).